The sequence spans 898 residues: Protein argonaute 1 (898 aa).

Residues 1-52 are disordered; it reads MLALNAGSQYPGRGRGRGRGDGGNRVHKHDGINRYHGGFRGGRGGGGGGFRD. Positions 18–33 are enriched in basic and acidic residues; it reads GRGDGGNRVHKHDGIN. Over residues 38 to 50 the composition is skewed to gly residues; that stretch reads GFRGGRGGGGGGF. The PAZ domain occupies 283-378; that stretch reads KCSDEMRRLR…IFADRTKMSR (96 aa). One can recognise a Piwi domain in the interval 542 to 883; the sequence is FAMVKLRTKE…YARKYGSLKS (342 aa).

The protein belongs to the argonaute family.

It localises to the cytoplasm. In terms of biological role, involved in RNA-mediated gene silencing (RNAi) of mobile elements and repeats including retroposons SLACS (Spliced Leader Associated Conserved Sequence), TATE (Telomere-Associated Transposable Element) and TAS-like sequences (Telomere Associated Sequence), and a family of 74-nucleotide long tandem repeats, CIR74. Predominantly binds to siRNAs derived from SLACS and TATE transposable elements and to a lesser extent to siRNAs from TAS-like and CIR74 elements. The polypeptide is Protein argonaute 1 (Leishmania braziliensis).